Consider the following 630-residue polypeptide: Threonine--tRNA ligase (630 aa).

The interval 1–137 (MKVLLIHSDY…PLSELSRKIT (137 aa)) is editing domain. The tract at residues 207–506 (PHVKFITEKE…ADAGAPPMLP (300 aa)) is catalytic. Zn(2+)-binding residues include Cys299, His351, and His475.

It belongs to the class-II aminoacyl-tRNA synthetase family. As to quaternary structure, homodimer. Zn(2+) is required as a cofactor.

The protein resides in the cytoplasm. The catalysed reaction is tRNA(Thr) + L-threonine + ATP = L-threonyl-tRNA(Thr) + AMP + diphosphate + H(+). Catalyzes the attachment of threonine to tRNA(Thr) in a two-step reaction: L-threonine is first activated by ATP to form Thr-AMP and then transferred to the acceptor end of tRNA(Thr). Also edits incorrectly charged L-seryl-tRNA(Thr). The polypeptide is Threonine--tRNA ligase (Methanococcus aeolicus (strain ATCC BAA-1280 / DSM 17508 / OCM 812 / Nankai-3)).